We begin with the raw amino-acid sequence, 304 residues long: ATP synthase gamma chain (304 aa).

It belongs to the ATPase gamma chain family. As to quaternary structure, F-type ATPases have 2 components, CF(1) - the catalytic core - and CF(0) - the membrane proton channel. CF(1) has five subunits: alpha(3), beta(3), gamma(1), delta(1), epsilon(1). CF(0) has three main subunits: a, b and c.

The protein resides in the cell membrane. Its function is as follows. Produces ATP from ADP in the presence of a proton gradient across the membrane. The gamma chain is believed to be important in regulating ATPase activity and the flow of protons through the CF(0) complex. This Mycobacterium marinum (strain ATCC BAA-535 / M) protein is ATP synthase gamma chain.